A 350-amino-acid polypeptide reads, in one-letter code: MTDQRPSLEIRLCGPRGFCAGVDRAIQIVVLALKKYGAPVYVRHEIVHNRYVVEGLQSRGAIFVEELHEIPAEHRDQPVVFSAHGVPKSVPADAEAKNLFYLDATCPLVSKVHKQAMRHQRLGRHVILIGHSGHPEVIGTMGQLPDGAVTLIETVEDARSCHFDDENNLGFVTQTTLSVDDTAGIIEELQARFPNLSAPAAESICYATTNRQDAVRSAAPGCDLFLIVGAPNSSNSKRLVEVAEKAGARMSMLVQRAADIEWDRIGDISVVGLSAGASAPEIIVDEIIDAFKARFNVKIELAETTVETENFLVNREIRDVELTVQDMAFVNGEHRVVGIPKLMPKIIQGK.

Cysteine 19 contacts [4Fe-4S] cluster. Positions 48 and 84 each coordinate (2E)-4-hydroxy-3-methylbut-2-enyl diphosphate. The dimethylallyl diphosphate site is built by histidine 48 and histidine 84. Isopentenyl diphosphate is bound by residues histidine 48 and histidine 84. Residue cysteine 106 participates in [4Fe-4S] cluster binding. Residue histidine 134 coordinates (2E)-4-hydroxy-3-methylbut-2-enyl diphosphate. Residue histidine 134 participates in dimethylallyl diphosphate binding. Histidine 134 contributes to the isopentenyl diphosphate binding site. Catalysis depends on glutamate 136, which acts as the Proton donor. Residue threonine 175 participates in (2E)-4-hydroxy-3-methylbut-2-enyl diphosphate binding. Cysteine 205 is a binding site for [4Fe-4S] cluster. Positions 233, 234, 235, and 278 each coordinate (2E)-4-hydroxy-3-methylbut-2-enyl diphosphate. 4 residues coordinate dimethylallyl diphosphate: serine 233, serine 234, asparagine 235, and serine 278. Isopentenyl diphosphate is bound by residues serine 233, serine 234, asparagine 235, and serine 278.

This sequence belongs to the IspH family. [4Fe-4S] cluster serves as cofactor.

The catalysed reaction is isopentenyl diphosphate + 2 oxidized [2Fe-2S]-[ferredoxin] + H2O = (2E)-4-hydroxy-3-methylbut-2-enyl diphosphate + 2 reduced [2Fe-2S]-[ferredoxin] + 2 H(+). The enzyme catalyses dimethylallyl diphosphate + 2 oxidized [2Fe-2S]-[ferredoxin] + H2O = (2E)-4-hydroxy-3-methylbut-2-enyl diphosphate + 2 reduced [2Fe-2S]-[ferredoxin] + 2 H(+). The protein operates within isoprenoid biosynthesis; dimethylallyl diphosphate biosynthesis; dimethylallyl diphosphate from (2E)-4-hydroxy-3-methylbutenyl diphosphate: step 1/1. It participates in isoprenoid biosynthesis; isopentenyl diphosphate biosynthesis via DXP pathway; isopentenyl diphosphate from 1-deoxy-D-xylulose 5-phosphate: step 6/6. In terms of biological role, catalyzes the conversion of 1-hydroxy-2-methyl-2-(E)-butenyl 4-diphosphate (HMBPP) into a mixture of isopentenyl diphosphate (IPP) and dimethylallyl diphosphate (DMAPP). Acts in the terminal step of the DOXP/MEP pathway for isoprenoid precursor biosynthesis. The sequence is that of 4-hydroxy-3-methylbut-2-enyl diphosphate reductase from Brucella anthropi (strain ATCC 49188 / DSM 6882 / CCUG 24695 / JCM 21032 / LMG 3331 / NBRC 15819 / NCTC 12168 / Alc 37) (Ochrobactrum anthropi).